The primary structure comprises 364 residues: Endopolygalacturonase B (364 aa).

Positions 1-20 are cleaved as a signal peptide; it reads MHFLQNSLIAAAMGAALVAA. Positions 21-29 are excised as a propeptide; the sequence is APAADLDAR. A disulfide bridge links cysteine 32 with cysteine 47. The N-linked (GlcNAc...) asparagine glycan is linked to asparagine 138. PbH1 repeat units follow at residues 159–188, 189–210, 211–231, 240–261, 269–291, and 303–348; these read SDHL…DIGS, STYI…AINS, GEHI…SIGS, VKSV…RIKT, VTDV…IVEQ, and TNGV…DITG. The active-site Proton donor is aspartate 203. Cysteine 205 and cysteine 221 form a disulfide bridge. Residue histidine 225 is part of the active site. Disulfide bonds link cysteine 331–cysteine 336 and cysteine 355–cysteine 364.

The protein belongs to the glycosyl hydrolase 28 family.

Its subcellular location is the secreted. It catalyses the reaction (1,4-alpha-D-galacturonosyl)n+m + H2O = (1,4-alpha-D-galacturonosyl)n + (1,4-alpha-D-galacturonosyl)m.. Involved in maceration and soft-rotting of plant tissue. Hydrolyzes the 1,4-alpha glycosidic bonds of de-esterified pectate in the smooth region of the plant cell wall. This Emericella nidulans (strain FGSC A4 / ATCC 38163 / CBS 112.46 / NRRL 194 / M139) (Aspergillus nidulans) protein is Endopolygalacturonase B (pgaB).